The chain runs to 211 residues: LexA repressor (211 aa).

Residues 31 to 51 (RAEISKELGFRSPNAAEEHLK) constitute a DNA-binding region (H-T-H motif). Residues serine 127 and lysine 164 each act as for autocatalytic cleavage activity in the active site.

Belongs to the peptidase S24 family. Homodimer.

The catalysed reaction is Hydrolysis of Ala-|-Gly bond in repressor LexA.. Represses a number of genes involved in the response to DNA damage (SOS response), including recA and lexA. In the presence of single-stranded DNA, RecA interacts with LexA causing an autocatalytic cleavage which disrupts the DNA-binding part of LexA, leading to derepression of the SOS regulon and eventually DNA repair. In Pasteurella multocida (strain Pm70), this protein is LexA repressor.